Reading from the N-terminus, the 304-residue chain is MSEAKQIYHVPVLLNESVDGMNIQPGGIYVDATFGGGGHSKEILSRLDSTAHLYSFDQDEDAEKNIVSDSRFTFVRSNFRYLPNFLRYYGVEGVDAILADLGVSSHHFDDSERGFSFRFEGKLDMRMNKRAGMTAADVVNTYDEERLANIFYLYGELKNSRKLASAIVKARGVKQIVTIGDFLEVIKPLFGREREKKELAKVFQALRIEVNQEMEALKEMLYAATKALKPGGRLVVITYHSLEDRMVKNIMKTGNIEGKAEQDFFGNVQTPFKLVNNKVIVAGNEEVTRNPRSRSAKLRIAEKR.

Residues 37-39, Asp57, Phe79, Asp100, and His107 contribute to the S-adenosyl-L-methionine site; that span reads GGH.

The protein belongs to the methyltransferase superfamily. RsmH family.

Its subcellular location is the cytoplasm. The enzyme catalyses cytidine(1402) in 16S rRNA + S-adenosyl-L-methionine = N(4)-methylcytidine(1402) in 16S rRNA + S-adenosyl-L-homocysteine + H(+). Functionally, specifically methylates the N4 position of cytidine in position 1402 (C1402) of 16S rRNA. The sequence is that of Ribosomal RNA small subunit methyltransferase H from Phocaeicola vulgatus (strain ATCC 8482 / DSM 1447 / JCM 5826 / CCUG 4940 / NBRC 14291 / NCTC 11154) (Bacteroides vulgatus).